The sequence spans 513 residues: Aspartic proteinase A2 (513 aa).

The N-terminal stretch at 1–24 is a signal peptide; the sequence is MGVYSRAVAFSVFVSFLLFFTAYS. Residues 25 to 71 constitute a propeptide, activation peptide; the sequence is KRNDGTFRVGLKKLKLDPNNRLATRFGSKQEEALRSSLRSYNNNLGG. Positions 89–510 constitute a Peptidase A1 domain; sequence YYGEIAIGTP…DFGNEQVGFA (422 aa). Asp-107 is a catalytic residue. Disulfide bonds link Cys-120-Cys-126 and Cys-285-Cys-289. The active site involves Asp-294. The Saposin B-type domain occupies 319–424; the sequence is VVSQQCKTVV…NEICERMPSP (106 aa). 4 cysteine pairs are disulfide-bonded: Cys-324-Cys-418, Cys-349-Cys-390, Cys-355-Cys-387, and Cys-432-Cys-469. A glycan (N-linked (GlcNAc...) asparagine) is linked at Asn-404.

It belongs to the peptidase A1 family. As to expression, expressed in seed pods and dry seeds.

It localises to the vacuole. Its function is as follows. Involved in the breakdown of propeptides of storage proteins in protein-storage vacuoles. This Arabidopsis thaliana (Mouse-ear cress) protein is Aspartic proteinase A2 (APA2).